Here is an 86-residue protein sequence, read N- to C-terminus: Small ribosomal subunit protein bS20 (86 aa).

The tract at residues 1–26 (MANIKSAKKRALQSEKSRKHNASRRT) is disordered.

The protein belongs to the bacterial ribosomal protein bS20 family.

Binds directly to 16S ribosomal RNA. This chain is Small ribosomal subunit protein bS20, found in Psychromonas ingrahamii (strain DSM 17664 / CCUG 51855 / 37).